Consider the following 240-residue polypeptide: Large ribosomal subunit protein uL2 (240 aa).

Positions 1–11 (MGKRLISQNRG) are enriched in polar residues. 2 disordered regions span residues 1–28 (MGKR…KGAV) and 206–240 (GGGR…TGRK). 2 stretches are compositionally biased toward basic residues: residues 13-28 (GTPK…KGAV) and 224-240 (SPGR…TGRK).

Belongs to the universal ribosomal protein uL2 family. As to quaternary structure, part of the 50S ribosomal subunit. Forms a bridge to the 30S subunit in the 70S ribosome.

One of the primary rRNA binding proteins. Required for association of the 30S and 50S subunits to form the 70S ribosome, for tRNA binding and peptide bond formation. It has been suggested to have peptidyltransferase activity; this is somewhat controversial. Makes several contacts with the 16S rRNA in the 70S ribosome. This is Large ribosomal subunit protein uL2 from Methanococcus maripaludis (strain C7 / ATCC BAA-1331).